The sequence spans 166 residues: Small ribosomal subunit protein uS5 (166 aa).

Positions 11–74 (LEDRVVSINR…EDAKKNLINV (64 aa)) constitute an S5 DRBM domain.

Belongs to the universal ribosomal protein uS5 family. In terms of assembly, part of the 30S ribosomal subunit. Contacts proteins S4 and S8.

In terms of biological role, with S4 and S12 plays an important role in translational accuracy. Its function is as follows. Located at the back of the 30S subunit body where it stabilizes the conformation of the head with respect to the body. This is Small ribosomal subunit protein uS5 from Latilactobacillus sakei subsp. sakei (strain 23K) (Lactobacillus sakei subsp. sakei).